Consider the following 309-residue polypeptide: Olfactory receptor 2G3 (309 aa).

Topologically, residues 1–25 (MGLGNESSLMDFILLGFSDHPRLEA) are extracellular. Asn5 is a glycosylation site (N-linked (GlcNAc...) asparagine). A helical membrane pass occupies residues 26–49 (VLFVFVLFFYLLTLVGNFTIIIIS). The Cytoplasmic segment spans residues 50–57 (YLDPPLHT). The helical transmembrane segment at 58–79 (PMYFFLSNLSLLDICFTTSLAP) threads the bilayer. Residues 80–100 (QTLVNLQRPKKTITYGGCVAQ) lie on the Extracellular side of the membrane. A disulfide bond links Cys97 and Cys189. A helical membrane pass occupies residues 101-120 (LYISLALGSTECILLADMAL). Over 121-139 (DRYIAVCKPLHYVVIMNPR) the chain is Cytoplasmic. The chain crosses the membrane as a helical span at residues 140-158 (LCQQLASISWLSGLASSLI). The Extracellular segment spans residues 159–195 (HATFTLQLPLCGNHRLDHFICEVPALLKLACVDTTVN). A helical transmembrane segment spans residues 196–219 (ELVLFVVSVLFVVIPPALISISYG). Over 220–236 (FITQAVLRIKSVEARHK) the chain is Cytoplasmic. Residues 237 to 259 (AFSTCSSHLTVVIIFYGTIIYVY) form a helical membrane-spanning segment. At 260–272 (LQPSDSYAQDQGK) the chain is on the extracellular side. The chain crosses the membrane as a helical span at residues 273–292 (FISLFYTMVTPTLNPIIYTL). The Cytoplasmic segment spans residues 293-309 (RNKDMKEALRKLLSGKL).

Belongs to the G-protein coupled receptor 1 family.

It localises to the cell membrane. In terms of biological role, odorant receptor. This chain is Olfactory receptor 2G3 (OR2G3), found in Homo sapiens (Human).